The sequence spans 360 residues: Inhibin alpha chain (360 aa).

A signal peptide spans 1-17 (MWLQLLLLLLAPQGGHG). Residues 18–60 (CHGLELDRELVLAKVRALFLDALGPPPVTGEGGDPGVRRLHRR) constitute a propeptide that is removed on maturation. Residues 61 to 226 (HAVGGFMRRG…PPSGGERARR (166 aa)) constitute a propeptide, inhibin alpha N-terminal region. 2 N-linked (GlcNAc...) asparagine glycosylation sites follow: Asn-140 and Asn-262. 3 disulfides stabilise this stretch: Cys-256–Cys-322, Cys-285–Cys-357, and Cys-289–Cys-359.

Belongs to the TGF-beta family. In terms of assembly, dimeric, linked by one or more disulfide bonds. Activin B is a dimer of alpha and beta-B. Inhibin A is a dimer of alpha and beta-A. Inhibin B is a dimer of alpha and beta-B. Interacts with TGFBR3L; this interaction regulates female fertility. In terms of processing, proteolytic processing yields a number of bioactive forms, consisting either solely of the mature alpha chain, of the most N-terminal propeptide linked through a disulfide bond to the mature alpha chain, or of the entire proprotein.

Its subcellular location is the secreted. Inhibins and activins inhibit and activate, respectively, the secretion of follitropin by the pituitary gland. Inhibins/activins are involved in regulating a number of diverse functions such as hypothalamic and pituitary hormone secretion, gonadal hormone secretion, germ cell development and maturation, erythroid differentiation, insulin secretion, nerve cell survival, embryonic axial development or bone growth, depending on their subunit composition. Inhibins appear to oppose the functions of activins. In terms of biological role, inhibin A is a dimer of alpha/INHA and beta-A/INHBA that functions as a feedback regulator in the hypothalamic-pituitary-gonadal (HPG) axis. Inhibits the secretion of FSH from the anterior pituitary gland by acting on pituitary gonadotrope cells. Antagonizes activin A by binding to the proteoglycan, betaglycan, and forming a stable complex with and, thereby, sequestering type II activin receptors while excluding type I receptor. Its function is as follows. Inhibin B is a dimer of alpha and beta-B that plays a crucial role in the regulation of the reproductive system by inhibiting the secretion of follicle-stimulating hormone (FSH) from the anterior pituitary gland. Thereby, maintains reproductive homeostasis in both males and females. Acts as a more potent suppressor of FSH release than inhibin A. Functions as competitive receptor antagonist binding activin type II receptors with high affinity in the presence of the TGF-beta type III coreceptor/TGFBR3L. The chain is Inhibin alpha chain (INHA) from Bos taurus (Bovine).